A 131-amino-acid chain; its full sequence is Probable ATP synthase subunit g 1, mitochondrial (131 aa).

It belongs to the ATPase g subunit family. Subunit of the F-type ATPase which has 2 components, CF(1) - the catalytic core - and CF(0) - the membrane proton channel.

It is found in the mitochondrion membrane. Functionally, mitochondrial membrane ATP synthase (F(1)F(0) ATP synthase or Complex V) produces ATP from ADP in the presence of a proton gradient across the membrane which is generated by electron transport complexes of the respiratory chain. F-type ATPases consist of two structural domains, F(1) - containing the extramembraneous catalytic core, and F(0) - containing the membrane proton channel, linked together by a central stalk and a peripheral stalk. During catalysis, ATP synthesis in the catalytic domain of F(1) is coupled via a rotary mechanism of the central stalk subunits to proton translocation. Part of the complex F(0) domain. Minor subunit located with subunit a in the membrane. The polypeptide is Probable ATP synthase subunit g 1, mitochondrial (Caenorhabditis elegans).